The chain runs to 54 residues: Ribulose bisphosphate carboxylase large chain (54 aa).

Positions 1-2 are excised as a propeptide; that stretch reads MS. The residue at position 3 (Pro-3) is an N-acetylproline. Lys-14 carries the post-translational modification N6,N6,N6-trimethyllysine.

The protein belongs to the RuBisCO large chain family. Type I subfamily. Heterohexadecamer of 8 large chains and 8 small chains.

The protein localises to the plastid. It localises to the chloroplast. The catalysed reaction is 2 (2R)-3-phosphoglycerate + 2 H(+) = D-ribulose 1,5-bisphosphate + CO2 + H2O. It catalyses the reaction D-ribulose 1,5-bisphosphate + O2 = 2-phosphoglycolate + (2R)-3-phosphoglycerate + 2 H(+). Its function is as follows. RuBisCO catalyzes two reactions: the carboxylation of D-ribulose 1,5-bisphosphate, the primary event in carbon dioxide fixation, as well as the oxidative fragmentation of the pentose substrate in the photorespiration process. Both reactions occur simultaneously and in competition at the same active site. The sequence is that of Ribulose bisphosphate carboxylase large chain (rbcL) from Geum borisii (Avens).